An 868-amino-acid polypeptide reads, in one-letter code: Protein NIP100 (868 aa).

Residues 34-84 (GETQFAKGIWYGIELDKPLGKNDGSANGIRYFDIDLKKANSNGGYYGLFCK) form the CAP-Gly domain. Coiled coils occupy residues 101-175 (LNGN…HLDN), 207-375 (LDQT…QEEL), and 645-776 (SLLS…QIKE).

In terms of assembly, component of the dynactin complex composed of at least ARP1, JNM1, NIP100 and ARP10. Dynactin comprises a short rod of the ARP1 filament attached to ARP10 at its pointed-end and probably associated with the capping protein at its barbed-end. The rod is implicated in dynein cargo binding. A sidearm formed by NIP100 projects from the ARP1 filament and is implicated in motor binding.

It localises to the cytoplasm. The protein resides in the cytoskeleton. It is found in the spindle pole. In terms of biological role, motor-binding component of the dynactin complex which assists cytoplasmic dynein by increasing its processivity and by regulation of its cargo binding. The dynactin complex is required for the spindle translocation late in anaphase and is involved in a cell wall synthesis checkpoint. The chain is Protein NIP100 (NIP100) from Saccharomyces cerevisiae (strain ATCC 204508 / S288c) (Baker's yeast).